The chain runs to 837 residues: MGELFRSEEMTLAQLFLQSEAAYCCVSELGELGKVQFRDLNPDVNVFQRKFVNEVRRCEEMDRKLRFVEKEIRKANIPIMDTGENPEVPFPRDMIDLEANFEKIENELKEINTNQEALKRNFLELTELKFILRKTQQFFDEMADPDLLGESSSLLEPSEMGRGTPLRLGFVAGVINRERIPTFERMLWRVCRGNVFLRQAEIENPLEDPVTGDYVHKSVFIIFFQGDQLKNRVKKICEGFRASLYPCPETPQERKEMASGVNTRIDDLQMVLNQMEDHRQRVLQAAAKNIRVWFIKVRKMKAIYHTLNLCNIDVTQKCLIAEVWCPVTDLDSIQFALRRGTEHSGSTVPSILNRMQTNQTPPTYNKTNKFTYGFQNIVDAYGIGTYREINPAPYTIITFPFLFAVMFGDFGHGILMTLFAVWMVLRESRILSQKNENEMFSTVFSGRYIILLMGVFSMYTGLIYNDCFSKSLNIFGSSWSVRPMFTYNWTEETLRGNPVLQLNPALPGVFGGPYPFGIDPIWNIATNKLTFLNSFKMKMSVILGIIHMLFGVSLSLFNHIYFKKPLNIYFGFIPEIIFMTSLFGYLVILIFYKWTAYDAHTSENAPSLLIHFINMFLFSYPESGYSMLYSGQKGIQCFLVVVALLCVPWMLLFKPLVLRRQYLRRKHLGTLNFGGIRVGNGPTEEDAEIIQHDQLSTHSEDADEPTEDEVFDFGATMVHQAIHTIEYCLGCISNTASYLRLWALSLAHAQLSEVLWTMVIHIGLSVKSLAGGLVLFFFFTAFATLTVAILLIMEGLSAFLHALRLHWVEFQNKFYSGTGFKFLPFSFEHIREGKFGE.

At 1–388 the chain is on the cytoplasmic side; sequence MGELFRSEEM…DAYGIGTYRE (388 aa). Phosphothreonine occurs at positions 250 and 360. Position 364 is a phosphotyrosine (Tyr364). A helical transmembrane segment spans residues 389–407; sequence INPAPYTIITFPFLFAVMF. Residues 408–409 are Vacuolar-facing; it reads GD. Residues 410–426 traverse the membrane as a helical segment; sequence FGHGILMTLFAVWMVLR. Over 427 to 441 the chain is Cytoplasmic; it reads ESRILSQKNENEMFS. A helical transmembrane segment spans residues 442–471; sequence TVFSGRYIILLMGVFSMYTGLIYNDCFSKS. Over 472–534 the chain is Vacuolar; it reads LNIFGSSWSV…ATNKLTFLNS (63 aa). The chain crosses the membrane as a helical span at residues 535–554; that stretch reads FKMKMSVILGIIHMLFGVSL. Topologically, residues 555 to 572 are cytoplasmic; sequence SLFNHIYFKKPLNIYFGF. Residues 573–593 form a helical membrane-spanning segment; the sequence is IPEIIFMTSLFGYLVILIFYK. Topologically, residues 594 to 638 are vacuolar; the sequence is WTAYDAHTSENAPSLLIHFINMFLFSYPESGYSMLYSGQKGIQCF. A helical membrane pass occupies residues 639–658; the sequence is LVVVALLCVPWMLLFKPLVL. The Cytoplasmic portion of the chain corresponds to 659 to 724; the sequence is RRQYLRRKHL…ATMVHQAIHT (66 aa). Residues 725 to 749 traverse the membrane as a helical segment; the sequence is IEYCLGCISNTASYLRLWALSLAHA. Over 750-770 the chain is Vacuolar; it reads QLSEVLWTMVIHIGLSVKSLA. A helical transmembrane segment spans residues 771 to 809; the sequence is GGLVLFFFFTAFATLTVAILLIMEGLSAFLHALRLHWVE. Residues 810–837 are Cytoplasmic-facing; sequence FQNKFYSGTGFKFLPFSFEHIREGKFGE.

This sequence belongs to the V-ATPase 116 kDa subunit family. V-ATPase is a heteromultimeric enzyme made up of two complexes: the ATP-hydrolytic V1 complex and the proton translocation V0 complex. The V1 complex consists of three catalytic AB heterodimers that form a heterohexamer, three peripheral stalks each consisting of EG heterodimers, one central rotor including subunits D and F, and the regulatory subunits C and H. The proton translocation complex V0 consists of the proton transport subunit a, a ring of proteolipid subunits c9c'', rotary subunit d, subunits e and f, and the accessory subunits ATP6AP1/Ac45 and ATP6AP2/PRR. Interacts with SPAAR.

The protein localises to the cytoplasmic vesicle. The protein resides in the clathrin-coated vesicle membrane. It is found in the secretory vesicle. Its subcellular location is the synaptic vesicle membrane. It localises to the melanosome. Its function is as follows. Subunit of the V0 complex of vacuolar(H+)-ATPase (V-ATPase), a multisubunit enzyme composed of a peripheral complex (V1) that hydrolyzes ATP and a membrane integral complex (V0) that translocates protons. V-ATPase is responsible for the acidification of various organelles, such as lysosomes, endosomes, the trans-Golgi network, and secretory granules, including synaptic vesicles. In certain cell types, can be exported to the plasma membrane, where it is involved in the acidification of the extracellular environment. Required for assembly and activity of the vacuolar ATPase. Through its action on compartment acidification, plays an essential role in neuronal development in terms of integrity and connectivity of neurons. The sequence is that of V-type proton ATPase 116 kDa subunit a 1 (ATP6V0A1) from Pongo abelii (Sumatran orangutan).